Here is a 288-residue protein sequence, read N- to C-terminus: ATP synthase gamma chain (288 aa).

It belongs to the ATPase gamma chain family. F-type ATPases have 2 components, CF(1) - the catalytic core - and CF(0) - the membrane proton channel. CF(1) has five subunits: alpha(3), beta(3), gamma(1), delta(1), epsilon(1). CF(0) has three main subunits: a, b and c.

The protein resides in the cell membrane. In terms of biological role, produces ATP from ADP in the presence of a proton gradient across the membrane. The gamma chain is believed to be important in regulating ATPase activity and the flow of protons through the CF(0) complex. The polypeptide is ATP synthase gamma chain (Staphylococcus aureus (strain Mu3 / ATCC 700698)).